A 994-amino-acid polypeptide reads, in one-letter code: Phosphoenolpyruvate carboxylase (994 aa).

The interval 1–66 (MKSSGSARAT…QGRTREDKDR (66 aa)) is disordered. Composition is skewed to low complexity over residues 14 to 25 (AVSSSSAPAHAE) and 41 to 54 (AAAR…AASA). Catalysis depends on residues histidine 204 and lysine 646.

Belongs to the PEPCase type 1 family. The cofactor is Mg(2+).

The catalysed reaction is oxaloacetate + phosphate = phosphoenolpyruvate + hydrogencarbonate. Forms oxaloacetate, a four-carbon dicarboxylic acid source for the tricarboxylic acid cycle. In Burkholderia mallei (strain NCTC 10247), this protein is Phosphoenolpyruvate carboxylase.